Reading from the N-terminus, the 211-residue chain is Histidine biosynthesis bifunctional protein HisIE (211 aa).

The phosphoribosyl-AMP cyclohydrolase stretch occupies residues methionine 1–isoleucine 118. The interval isoleucine 119 to glutamate 211 is phosphoribosyl-ATP pyrophosphohydrolase.

It in the N-terminal section; belongs to the PRA-CH family. This sequence in the C-terminal section; belongs to the PRA-PH family.

It localises to the cytoplasm. The enzyme catalyses 1-(5-phospho-beta-D-ribosyl)-ATP + H2O = 1-(5-phospho-beta-D-ribosyl)-5'-AMP + diphosphate + H(+). The catalysed reaction is 1-(5-phospho-beta-D-ribosyl)-5'-AMP + H2O = 1-(5-phospho-beta-D-ribosyl)-5-[(5-phospho-beta-D-ribosylamino)methylideneamino]imidazole-4-carboxamide. It functions in the pathway amino-acid biosynthesis; L-histidine biosynthesis; L-histidine from 5-phospho-alpha-D-ribose 1-diphosphate: step 2/9. It participates in amino-acid biosynthesis; L-histidine biosynthesis; L-histidine from 5-phospho-alpha-D-ribose 1-diphosphate: step 3/9. In Halalkalibacterium halodurans (strain ATCC BAA-125 / DSM 18197 / FERM 7344 / JCM 9153 / C-125) (Bacillus halodurans), this protein is Histidine biosynthesis bifunctional protein HisIE (hisI).